An 890-amino-acid polypeptide reads, in one-letter code: DNA mismatch repair protein MutS (890 aa).

607-614 (GPNMSGKS) lines the ATP pocket.

It belongs to the DNA mismatch repair MutS family.

Its function is as follows. This protein is involved in the repair of mismatches in DNA. It is possible that it carries out the mismatch recognition step. This protein has a weak ATPase activity. This Bacillus mycoides (strain KBAB4) (Bacillus weihenstephanensis) protein is DNA mismatch repair protein MutS.